A 241-amino-acid polypeptide reads, in one-letter code: Deoxyribose-phosphate aldolase (241 aa).

The active-site Proton donor/acceptor is the Asp-95. The Schiff-base intermediate with acetaldehyde role is filled by Lys-159. Lys-188 (proton donor/acceptor) is an active-site residue.

This sequence belongs to the DeoC/FbaB aldolase family. DeoC type 1 subfamily.

It is found in the cytoplasm. It catalyses the reaction 2-deoxy-D-ribose 5-phosphate = D-glyceraldehyde 3-phosphate + acetaldehyde. It functions in the pathway carbohydrate degradation; 2-deoxy-D-ribose 1-phosphate degradation; D-glyceraldehyde 3-phosphate and acetaldehyde from 2-deoxy-alpha-D-ribose 1-phosphate: step 2/2. Its function is as follows. Catalyzes a reversible aldol reaction between acetaldehyde and D-glyceraldehyde 3-phosphate to generate 2-deoxy-D-ribose 5-phosphate. This is Deoxyribose-phosphate aldolase from Rhodopirellula baltica (strain DSM 10527 / NCIMB 13988 / SH1).